We begin with the raw amino-acid sequence, 304 residues long: PHO85 cyclin-9 (304 aa).

One can recognise a Cyclin N-terminal domain in the interval 19-146 (EMIQFLATST…LLEYLNWDVR (128 aa)).

Belongs to the cyclin family. PCL1,2 subfamily. Forms a cyclin-CDK complex with PHO85.

M/G1-specific cyclin partner of the cyclin-dependent kinase (CDK) PHO85. May have a role in bud site selection in G1 phase. This is PHO85 cyclin-9 (PCL9) from Saccharomyces cerevisiae (strain ATCC 204508 / S288c) (Baker's yeast).